The sequence spans 142 residues: Ribosome-binding factor A (142 aa).

The protein belongs to the RbfA family. Monomer. Binds 30S ribosomal subunits, but not 50S ribosomal subunits or 70S ribosomes.

It is found in the cytoplasm. Functionally, one of several proteins that assist in the late maturation steps of the functional core of the 30S ribosomal subunit. Associates with free 30S ribosomal subunits (but not with 30S subunits that are part of 70S ribosomes or polysomes). Required for efficient processing of 16S rRNA. May interact with the 5'-terminal helix region of 16S rRNA. In Leifsonia xyli subsp. xyli (strain CTCB07), this protein is Ribosome-binding factor A.